The sequence spans 96 residues: CKRRDIMKLIEVHSPNLNLLLPAPFDLIELPVRMEVGYEEIANDVRKAASVLVGEIMTKKVRTTKKDASISDAAALMDKHNVNRLPVVDENNKLVL.

Positions 57–96 (MTKKVRTTKKDASISDAAALMDKHNVNRLPVVDENNKLVL) constitute a CBS domain.

This is an uncharacterized protein from Methanobacterium ivanovii.